The sequence spans 472 residues: P2X purinoceptor 2 (472 aa).

The Cytoplasmic segment spans residues 1–34 (MVRRLARGCWSAFWDYETPKVIVVRNRRLGFVHR). Disulfide bonds link C9–C430, C113–C164, C124–C147, C130–C158, C214–C224, and C258–C267. The helical transmembrane segment at 35–52 (MVQLLILLYFVWYVFIVQ) threads the bilayer. Over 53–326 (KSYQDSETGP…IVHGQAGKFS (274 aa)) the chain is Extracellular. Positions 69 and 71 each coordinate ATP. N182 carries an N-linked (GlcNAc...) asparagine glycan. T184 contributes to the ATP binding site. N239 carries N-linked (GlcNAc...) asparagine glycosylation. Positions 284, 288, and 290 each coordinate ATP. N298 carries N-linked (GlcNAc...) asparagine glycosylation. K308 contacts ATP. Residues 309 to 322 (AYGIRIDVIVHGQA) are pore-forming motif. Residues 327 to 347 (LIPTIINLATALTSIGVGSFL) form a helical membrane-spanning segment. Residues 348-472 (CDWILLTFMN…STDPKGLAQL (125 aa)) lie on the Cytoplasmic side of the membrane. A disordered region spans residues 393-472 (PPPSHYSQDQ…STDPKGLAQL (80 aa)). Polar residues predominate over residues 456–465 (PSQQDSTSTD).

This sequence belongs to the P2X receptor family. As to quaternary structure, homotrimer and heterotrimer; functional P2XRs are organized as homomeric and heteromeric trimers. Homotrimer. Forms heterotrimer with P2RX1. Forms heterotrimer with P2RX6. Forms heterotrimer with P2RX3. In terms of tissue distribution, high levels in pituitary and vas deferens. Lower extent in spinal cord, bladder, brain, adrenal, testis, sensory epithelia from the inner ear.

It localises to the cell membrane. The catalysed reaction is Ca(2+)(in) = Ca(2+)(out). It catalyses the reaction K(+)(in) = K(+)(out). The enzyme catalyses Na(+)(in) = Na(+)(out). With respect to regulation, fast activation by external ATP. Exhibits slow desensitization during prolonged ATP activation. Not sensitive to the ATP agonist:alpha/beta-methylene-ATP. In terms of biological role, ATP-gated nonselective transmembrane cation channel permeable to potassium, sodium and calcium. Activation by extracellular ATP induces a variety of cellular responses, such as excitatory postsynaptic responses in sensory neurons, neuromuscular junctions (NMJ) formation, hearing, perception of taste and peristalsis. In the inner ear, regulates sound transduction and auditory neurotransmission, outer hair cell electromotility, inner ear gap junctions, and K(+) recycling. Mediates synaptic transmission between neurons and from neurons to smooth muscle. This Rattus norvegicus (Rat) protein is P2X purinoceptor 2 (P2rx2).